The sequence spans 1417 residues: MSARDFVEGEAMLDEEENEEELVDDYGDGEERLETGGNHYDSSEEDEDEDDDEDAVRAVREGFIVDEDEEEEERAERRRERRKRRREEREREDEHLDEEDLELIGELNPGLQYAAAADSKFKRLKRGHKDRDSRQPSQAINDFFNSDEEDEPAPDYGRHRRHPGDEMDDFIEEDVFSDDELQREREDLEVARPRKTIGFGATDTTGLDENALEDMRAAFGDGNEYDFALAMEEEEEQQEEDVEKHLDLKDVFEPSQLAEKMLTEEDNQIRLIDEPERHQIARKPYRNVVLSEDQFREEAAWIANLMLLKKRLEPELREPFQRSVAKVLEFLVTDDWEVPFIFQHRKDYMIHTVKVPVNGASADDSSSQYTIKAEKLLNMTDLWDIFDYDLKFKALVEKRNTIQKTYDNIRSVFSVEDPIVEEMLPIATTMEELQDIQDYLHFQYASQIRDLTLTNGDTNGEVQRRKALTRNFFERVRNSKAYGLVRAFGITADAFAQNALKEGRRQYTEDASERPEDMADGLVDNDFNNSSQVLKAAKGMFAEEIVMSPKMRKVIRQAYYMNGAVDCFRTEKGLRRIDEQHPYYEFKYLRDQQLSDIARSPELFLRMLKAEEEGLIEVKVRFENFENFRKRLYPNIESDNYSELADSWNRLRREAVDLALGKLERVINRSVKENIRQECENHVAKECREAFSQRLDQAPYKPKGMILGTVPRVLALSTGTGIIGRAPIHWAYVEEDGRVLENGKFTDLSLGDKDRGIADGKDLEALVELVNRRRPDVIGVSGMSPETRRLYKLLTEIVDAKDLRGALYTDDRDEEVSDRLEVVIVNDEVARLYQNSDRAKKDHPSFAPLTHYCVGLAKYLQSPLKEYASLGRDIVSIQFKPGQQLVAQELLLKQLETALVDMVNLVGVDINEAVSDPATANLLPYVCGLGPRKAAHLLKIVNMTGGVVNSRFSLLGVGVQYPAMGVKVWNNSASFLYIDYESADADSDPLDNTRVHPEDYDIARKMAADALELDEEDIKAETDENGPGAIVRKLFREDAQDRVNDLILEEYAEQLEKNLNQRKRATLETIRAELQQPYEELRKHFVFLSTDDIFTMLTGETAQTLAEGMVVPISIKSIRDDHIEGKLDCGVDALVGESEMTDRYDIPVRAIYSLHQTVPAKVMFLNRKTFTCNVSLREEQVSRPSRPAADRAHAGEWDYRQEEQDREALEAKTQDGGRTMRVIKHPLFRPFNSTQAVEFLGSQSRGDVVIRPSSKGPDHLAVTWKVADGIFQHIDVLELDKENEFSVGRTLKVGGRFTYSDLDDLIFNHVKAMAKKVDEMMLHEKYQEGSKDSTYQWLETYTKANPRRSAYAFCIDPKHAGYFFLCFKAGEHAQVHSWPVKVIPQGYELQRNPYPDMRALCNGFKLLFTNMQSGKRR.

Disordered regions lie at residues 1–109 (MSAR…ELNP) and 122–185 (KRLK…QRER). Composition is skewed to acidic residues over residues 11–28 (AMLDEEENEEELVDDYGD), 43–54 (SEEDEDEDDDED), and 64–73 (IVDEDEEEEE). Over residues 135–144 (QPSQAINDFF) the composition is skewed to polar residues. Positions 166-179 (EMDDFIEEDVFSDD) are enriched in acidic residues. One can recognise an S1 motif domain in the interval 1108 to 1177 (GMVVPISIKS…KTFTCNVSLR (70 aa)). The tract at residues 1181–1215 (VSRPSRPAADRAHAGEWDYRQEEQDREALEAKTQD) is disordered. Over residues 1188–1215 (AADRAHAGEWDYRQEEQDREALEAKTQD) the composition is skewed to basic and acidic residues. Residues 1226 to 1326 (PLFRPFNSTQ…VDEMMLHEKY (101 aa)) form the SH2 domain.

Belongs to the SPT6 family.

It is found in the nucleus. It localises to the chromosome. Its function is as follows. Histone H3-H4 chaperone that plays a role in maintenance of chromatin structure during RNA polymerase II transcription elongation thereby repressing transcription initiation from cryptic promoters. Mediates the reassembly of nucleosomes onto the promoters of at least a selected set of genes during repression; the nucleosome reassembly is essential for transcriptional repression. Essential for viability. The chain is Transcription elongation factor spt6 (spt6) from Emericella nidulans (strain FGSC A4 / ATCC 38163 / CBS 112.46 / NRRL 194 / M139) (Aspergillus nidulans).